The chain runs to 436 residues: Histidinol dehydrogenase (436 aa).

Residues Thr-240, Gln-262, and His-265 each coordinate substrate. Positions 262 and 265 each coordinate Zn(2+). Residues Glu-331 and His-332 each act as proton acceptor in the active site. The substrate site is built by His-332, Asp-365, Glu-419, and His-424. Asp-365 is a binding site for Zn(2+). Position 424 (His-424) interacts with Zn(2+).

It belongs to the histidinol dehydrogenase family. Zn(2+) serves as cofactor.

It catalyses the reaction L-histidinol + 2 NAD(+) + H2O = L-histidine + 2 NADH + 3 H(+). Its pathway is amino-acid biosynthesis; L-histidine biosynthesis; L-histidine from 5-phospho-alpha-D-ribose 1-diphosphate: step 9/9. In terms of biological role, catalyzes the sequential NAD-dependent oxidations of L-histidinol to L-histidinaldehyde and then to L-histidine. The sequence is that of Histidinol dehydrogenase from Leifsonia xyli subsp. xyli (strain CTCB07).